The sequence spans 406 residues: Protease ElaD (406 aa).

The active site involves His234. Cys316 (nucleophile) is an active-site residue.

This sequence belongs to the peptidase C79 family.

In terms of biological role, protease that can act as an efficient and specific deubiquitinating enzyme in vitro. Does not possess desumoylating and deneddylating activities. The physiological substrate is unknown. The polypeptide is Protease ElaD (elaD) (Escherichia coli O139:H28 (strain E24377A / ETEC)).